The sequence spans 300 residues: tRNA uridine(34) hydroxylase (300 aa).

In terms of domain architecture, Rhodanese spans 128–222 (ADPEVIVVDT…YLEDVPQAQS (95 aa)). Residue C182 is the Cysteine persulfide intermediate of the active site.

This sequence belongs to the TrhO family.

The enzyme catalyses uridine(34) in tRNA + AH2 + O2 = 5-hydroxyuridine(34) in tRNA + A + H2O. In terms of biological role, catalyzes oxygen-dependent 5-hydroxyuridine (ho5U) modification at position 34 in tRNAs. The polypeptide is tRNA uridine(34) hydroxylase (Deinococcus radiodurans (strain ATCC 13939 / DSM 20539 / JCM 16871 / CCUG 27074 / LMG 4051 / NBRC 15346 / NCIMB 9279 / VKM B-1422 / R1)).